The chain runs to 427 residues: Serine--tRNA ligase (427 aa).

231-233 (TAE) is a binding site for L-serine. Position 262 to 264 (262 to 264 (RSE)) interacts with ATP. E285 provides a ligand contact to L-serine. ATP is bound at residue 349–352 (EISS). S385 contributes to the L-serine binding site.

Belongs to the class-II aminoacyl-tRNA synthetase family. Type-1 seryl-tRNA synthetase subfamily. Homodimer. The tRNA molecule binds across the dimer.

Its subcellular location is the cytoplasm. The catalysed reaction is tRNA(Ser) + L-serine + ATP = L-seryl-tRNA(Ser) + AMP + diphosphate + H(+). The enzyme catalyses tRNA(Sec) + L-serine + ATP = L-seryl-tRNA(Sec) + AMP + diphosphate + H(+). It functions in the pathway aminoacyl-tRNA biosynthesis; selenocysteinyl-tRNA(Sec) biosynthesis; L-seryl-tRNA(Sec) from L-serine and tRNA(Sec): step 1/1. Its function is as follows. Catalyzes the attachment of serine to tRNA(Ser). Is also able to aminoacylate tRNA(Sec) with serine, to form the misacylated tRNA L-seryl-tRNA(Sec), which will be further converted into selenocysteinyl-tRNA(Sec). This is Serine--tRNA ligase from Brucella abortus (strain S19).